The sequence spans 33 residues: U1-pseudomyrmecitoxin-Pt1 subunit LS1 (33 aa).

The protein belongs to the myrmexin family. As to quaternary structure, heterodimer composed of subunit LS1 and subunit SS1 (U1-PSDTX-Pt1b), heterodimer composed of subunit LS1 and SS2 (U1-PSDTX-Pt1b), and heterodimer composed of subunit LS1 and SS3; disulfide-linked. As to expression, expressed by the venom gland.

The protein localises to the secreted. Its function is as follows. This heterodimer may have anti-inflammatory properties, since the myrmexin complex (composed of 6 SS-LS heterodimers) inhibits carrageenin-induced edema in a dose-dependent manner (after subcutaneous injection into rats). This Pseudomyrmex triplarinus (Ant) protein is U1-pseudomyrmecitoxin-Pt1 subunit LS1.